A 117-amino-acid chain; its full sequence is V-type proton ATPase subunit G (117 aa).

It belongs to the V-ATPase G subunit family. As to quaternary structure, V-ATPase is a heteromultimeric enzyme made up of two complexes: the ATP-hydrolytic V1 complex and the proton translocation V0 complex. The V1 complex consists of three catalytic AB heterodimers that form a heterohexamer, three peripheral stalks each consisting of EG heterodimers, one central rotor including subunits D and F, and the regulatory subunits C and H. The proton translocation complex V0 consists of the proton transport subunit a, a ring of proteolipid subunits c9c'', rotary subunit d, subunits e and f, and the accessory subunits VhaAC45 and ATP6AP2.

Its function is as follows. Subunit of the V1 complex of vacuolar(H+)-ATPase (V-ATPase), a multisubunit enzyme composed of a peripheral complex (V1) that hydrolyzes ATP and a membrane integral complex (V0) that translocates protons. V-ATPase is responsible for acidifying and maintaining the pH of intracellular compartments and in some cell types, is targeted to the plasma membrane, where it is responsible for acidifying the extracellular environment. In enterocytes, acts as part of a pHCl-2 sensory pathway which mediates Tor-dependent larval growth and metabolism in response to zinc availability. Likely acts in maintaining enterocyte lysosomal acidification which consequently promotes Tor activation at the lysosome membrane. The polypeptide is V-type proton ATPase subunit G (Vha13) (Drosophila melanogaster (Fruit fly)).